The following is a 498-amino-acid chain: MRINPTTSDPEVSIREKKNLGRIAQIIGPVLDVAFPPGKMPNIYNALVVKGRDTLGQEINVTCEVQQLLGNNRVRAVAMSATEGLKRGMDVVDMGSPLSVPVGGATLGRIFNVLGEPVDNLGPVDTRTTSPIHKSAPAFIELDTKLSIFETGIKVVDLLAPYRRGGKIGLFGGAGVGKTVLIMELINNIAKAHGGVSVFGGVGERTREGNDLYMEMKESGVINEQNLAESKVALVYGQMNEPPGARMRVGLTALTMAEYFRDVNEQDVLLFIDNIFRFVQAGSEVSALLGRMPSAVGYQPTLSTEMGSLQERITSTKKGSITSIQAVYVPADDLTDPAPATTFAHLDATTVLSRGLAAKGIYPAVDPLDSTSTMLQPRIVGEEHYETAQQVKQTLQRYKELQDIIAILGLDELSEEDRLTVARARKIERFLSQPFFVAEVFTGSPGKYVGLAETIRGFKLILSGEFDSLPEQAFYLVGNIDEATAKATNLEMESKLKK.

Phosphothreonine is present on Thr6. Ser13 carries the post-translational modification Phosphoserine. ATP is bound at residue 172 to 179 (GGAGVGKT).

The protein belongs to the ATPase alpha/beta chains family. As to quaternary structure, F-type ATPases have 2 components, CF(1) - the catalytic core - and CF(0) - the membrane proton channel. CF(1) has five subunits: alpha(3), beta(3), gamma(1), delta(1), epsilon(1). CF(0) has four main subunits: a(1), b(1), b'(1) and c(9-12).

The protein resides in the plastid. It is found in the chloroplast thylakoid membrane. The catalysed reaction is ATP + H2O + 4 H(+)(in) = ADP + phosphate + 5 H(+)(out). Functionally, produces ATP from ADP in the presence of a proton gradient across the membrane. The catalytic sites are hosted primarily by the beta subunits. In Draba nemorosa (Woodland whitlowgrass), this protein is ATP synthase subunit beta, chloroplastic.